The primary structure comprises 334 residues: Formamidase (334 aa).

The 247-residue stretch at 14-260 folds into the CN hydrolase domain; it reads FLVAAIQFPV…WEIVTGEIYP (247 aa). Glutamate 60 functions as the Proton acceptor in the catalytic mechanism. Lysine 133 acts as the Proton donor in catalysis. The active-site Nucleophile is the cysteine 166.

This sequence belongs to the carbon-nitrogen hydrolase superfamily. Aliphatic amidase family.

The catalysed reaction is formamide + H2O = formate + NH4(+). Its function is as follows. Is an aliphatic amidase with a restricted substrate specificity, as it only hydrolyzes formamide. The chain is Formamidase from Helicobacter acinonychis (strain Sheeba).